A 97-amino-acid polypeptide reads, in one-letter code: Putative membrane protein insertion efficiency factor (97 aa).

It belongs to the UPF0161 family.

The protein resides in the cell membrane. In terms of biological role, could be involved in insertion of integral membrane proteins into the membrane. The polypeptide is Putative membrane protein insertion efficiency factor (Lactobacillus gasseri (strain ATCC 33323 / DSM 20243 / BCRC 14619 / CIP 102991 / JCM 1131 / KCTC 3163 / NCIMB 11718 / NCTC 13722 / AM63)).